Here is a 355-residue protein sequence, read N- to C-terminus: MFLRSVSSITKPFRRIESPKQLARRMAVLPDTYADPVRIAVIGGTGLRELPGFTQVASLNIQTPWGTPSSPITILHHTHKDKTVAVAFLSRHGLHHQIAPHEVPARANIAALRSIGVRTIIAFSAVGSLQEEIKPRDFVVPDQVIDRTKGIRPFTFFEGGVVGHVPFGDPFDESVAKIVRACGHSLEGEGVKLHDRGTLICMEGPQFSTRAESKLYRSWGGSVINMSCLPEAKLAREAEIAYQMICMSTDYDCWHESTEDVTVEMVMGNMKANAVNAKHFVTAVLDELADDRNAELVQAKQYAGSVKFGLSTAQANWSPEARERMNWLFPGYFEIDLYIRYLLLIQRDIDLTSWN.

Residues T45, 91–92 (RH), and 124–125 (SA) contribute to the phosphate site. A substrate-binding site is contributed by M226. Residue S227 coordinates phosphate. 250–252 (DYD) provides a ligand contact to substrate.

The protein belongs to the PNP/MTAP phosphorylase family. MTAP subfamily. Homotrimer.

It localises to the cytoplasm. It is found in the nucleus. It carries out the reaction S-methyl-5'-thioadenosine + phosphate = 5-(methylsulfanyl)-alpha-D-ribose 1-phosphate + adenine. Its pathway is amino-acid biosynthesis; L-methionine biosynthesis via salvage pathway; S-methyl-5-thio-alpha-D-ribose 1-phosphate from S-methyl-5'-thioadenosine (phosphorylase route): step 1/1. Catalyzes the reversible phosphorylation of S-methyl-5'-thioadenosine (MTA) to adenine and 5-methylthioribose-1-phosphate. Involved in the breakdown of MTA, a major by-product of polyamine biosynthesis. Responsible for the first step in the methionine salvage pathway after MTA has been generated from S-adenosylmethionine. Has broad substrate specificity with 6-aminopurine nucleosides as preferred substrates. The polypeptide is S-methyl-5'-thioadenosine phosphorylase (Emericella nidulans (strain FGSC A4 / ATCC 38163 / CBS 112.46 / NRRL 194 / M139) (Aspergillus nidulans)).